The sequence spans 461 residues: UDP-N-acetylmuramoylalanine--D-glutamate ligase (461 aa).

An ATP-binding site is contributed by 123-129 (GTNGKTT).

Belongs to the MurCDEF family.

The protein localises to the cytoplasm. The enzyme catalyses UDP-N-acetyl-alpha-D-muramoyl-L-alanine + D-glutamate + ATP = UDP-N-acetyl-alpha-D-muramoyl-L-alanyl-D-glutamate + ADP + phosphate + H(+). Its pathway is cell wall biogenesis; peptidoglycan biosynthesis. Functionally, cell wall formation. Catalyzes the addition of glutamate to the nucleotide precursor UDP-N-acetylmuramoyl-L-alanine (UMA). This Natranaerobius thermophilus (strain ATCC BAA-1301 / DSM 18059 / JW/NM-WN-LF) protein is UDP-N-acetylmuramoylalanine--D-glutamate ligase.